The following is a 529-amino-acid chain: Fibroblast growth factor receptor-like 1 (529 aa).

Residues Met1 to Ala20 form the signal peptide. The Extracellular portion of the chain corresponds to Ala21–Pro374. 3 consecutive Ig-like C2-type domains span residues Pro25–Ile111, Pro143–Asp233, and Pro242–Thr350. An intrachain disulfide couples Cys47 to Cys95. The N-linked (GlcNAc...) asparagine glycan is linked to Asn107. Residues Ile116–Met151 form a disordered region. An intrachain disulfide couples Cys168 to Cys217. Residues Asn227, Asn251, and Asn289 are each glycosylated (N-linked (GlcNAc...) asparagine). A disulfide bridge links Cys264 with Cys334. A helical membrane pass occupies residues Val375–Cys395. Residues Gln396 to Ser529 are Cytoplasmic-facing. The disordered stretch occupies residues Ala405–Asp427.

Interacts with FGF2 with a low affinity. Highly expressed in the kidney, brain and lung. Weakly expressed in the muscle, thymus, lymph node, stomach, intestine, colon and liver. Expressed in fetal cartilaginous structures like the nasal cartilage, the ribs and the sternum as well as in the cartilaginous rudiments of developing bones such as the vertebrae and the pelvic bone. High expression is found in the muscles of the tongue and the diaphragm.

The protein resides in the cell membrane. Its function is as follows. Has a negative effect on cell proliferation. The chain is Fibroblast growth factor receptor-like 1 (Fgfrl1) from Mus musculus (Mouse).